Consider the following 100-residue polypeptide: Large ribosomal subunit protein uL23 (100 aa).

The protein belongs to the universal ribosomal protein uL23 family. As to quaternary structure, part of the 50S ribosomal subunit. Contacts protein L29, and trigger factor when it is bound to the ribosome.

One of the early assembly proteins it binds 23S rRNA. One of the proteins that surrounds the polypeptide exit tunnel on the outside of the ribosome. Forms the main docking site for trigger factor binding to the ribosome. The protein is Large ribosomal subunit protein uL23 of Shewanella piezotolerans (strain WP3 / JCM 13877).